Reading from the N-terminus, the 493-residue chain is MITTQMWHFYVTRVGLLLLISILPGTTGQGESRRQEPGDFVKQDIGGLSPKHAPDIPDDSTDNITIFTRILDRLLDGYDNRLRPGLGDAVTEVKTDIYVTSFGPVSDTDMEYTIDVFFRQTWHDERLKFDGPMKILPLNNLLASKIWTPDTFFHNGKKSVAHNMTTPNKLLRLVDNGTLLYTMRLTIHAECPMHLEDFPMDVHACPLKFGSYAYTKAEVIYSWTLGKNKSVEVAQDGSRLNQYDLLGHVVGTEIIRSSTGEYVVMTTHFHLKRKIGYFVIQTYLPCIMTVILSQVSFWLNRESVPARTVFGVTTVLTMTTLSISARNSLPKVAYATAMDWFIAVCYAFVFSALIEFATVNYFTKRSWAWEGKKVPEALEMKKKTPAAPTKKTSTTFNIVGTTYPINLAKDTEFSTISKAAAAPSASSTPTVIASPKTTYVQDSPAETKTYNSVSKVDKISRIIFPVLFAIFNLVYWATYVNRESAIKGMIRKQ.

Residues 1–28 (MITTQMWHFYVTRVGLLLLISILPGTTG) form the signal peptide. The segment at 27-54 (TGQGESRRQEPGDFVKQDIGGLSPKHAP) is disordered. At 29–276 (QGESRRQEPG…THFHLKRKIG (248 aa)) the chain is on the extracellular side. The segment covering 31-42 (ESRRQEPGDFVK) has biased composition (basic and acidic residues). Residue N63 is glycosylated (N-linked (GlcNAc...) asparagine). R119 contacts 4-aminobutanoate. Residues N163 and N176 are each glycosylated (N-linked (GlcNAc...) asparagine). T182 is a 4-aminobutanoate binding site. C191 and C205 form a disulfide bridge. N228 is a glycosylation site (N-linked (GlcNAc...) asparagine). Transmembrane regions (helical) follow at residues 277–298 (YFVIQTYLPCIMTVILSQVSFW), 304–325 (VPARTVFGVTTVLTMTTLSISA), and 338–359 (MDWFIAVCYAFVFSALIEFATV). Residues 360 to 458 (NYFTKRSWAW…TYNSVSKVDK (99 aa)) are Cytoplasmic-facing. S427 carries the post-translational modification Phosphoserine. T428 carries the post-translational modification Phosphothreonine. Phosphoserine is present on residues S434 and S443. Residues 459–480 (ISRIIFPVLFAIFNLVYWATYV) form a helical membrane-spanning segment.

It belongs to the ligand-gated ion channel (TC 1.A.9) family. Gamma-aminobutyric acid receptor (TC 1.A.9.5) subfamily. GABRA3 sub-subfamily. Heteropentamer, formed by a combination of alpha (GABRA1-6), beta (GABRB1-3), gamma (GABRG1-3), delta (GABRD), epsilon (GABRE), rho (GABRR1-3), pi (GABRP) and theta (GABRQ) chains, each subunit exhibiting distinct physiological and pharmacological properties. Binds UBQLN1. Interacts with GPHN. In terms of tissue distribution, expressed in most brain regions. Expressed in lungs, in alveolar epithelium.

It is found in the postsynaptic cell membrane. The protein resides in the cell membrane. It catalyses the reaction chloride(in) = chloride(out). Alpha subunit of the heteropentameric ligand-gated chloride channel gated by gamma-aminobutyric acid (GABA), a major inhibitory neurotransmitter in the brain. GABA-gated chloride channels, also named GABA(A) receptors (GABAAR), consist of five subunits arranged around a central pore and contain GABA active binding site(s) located at the alpha and beta subunit interface(s). When activated by GABA, GABAARs selectively allow the flow of chloride anions across the cell membrane down their electrochemical gradient. Chloride influx into the postsynaptic neuron following GABAAR opening decreases the neuron ability to generate a new action potential, thereby reducing nerve transmission. The chain is Gamma-aminobutyric acid receptor subunit alpha-3 from Rattus norvegicus (Rat).